Reading from the N-terminus, the 245-residue chain is Flavin-dependent thymidylate synthase (245 aa).

The ThyX domain maps to I5 to K210. FAD-binding positions include S59, R83–R85, and Q91. DUMP contacts are provided by residues Q80–R83, Q91–R95, and R149. Residues R83–S93 carry the ThyX motif motif. Residues N165 to R167 and H171 contribute to the FAD site. R176 contacts dUMP. Residue R176 is the Involved in ionization of N3 of dUMP, leading to its activation of the active site.

It belongs to the thymidylate synthase ThyX family. As to quaternary structure, homotetramer. The cofactor is FAD.

It carries out the reaction dUMP + (6R)-5,10-methylene-5,6,7,8-tetrahydrofolate + NADPH + H(+) = dTMP + (6S)-5,6,7,8-tetrahydrofolate + NADP(+). The protein operates within pyrimidine metabolism; dTTP biosynthesis. Catalyzes the reductive methylation of 2'-deoxyuridine-5'-monophosphate (dUMP) to 2'-deoxythymidine-5'-monophosphate (dTMP) while utilizing 5,10-methylenetetrahydrofolate (mTHF) as the methyl donor, and NADPH and FADH(2) as the reductant. This is Flavin-dependent thymidylate synthase from Thermococcus kodakarensis (strain ATCC BAA-918 / JCM 12380 / KOD1) (Pyrococcus kodakaraensis (strain KOD1)).